The following is a 72-amino-acid chain: Translation initiation factor IF-1 (72 aa).

The S1-like domain maps to 1–72 (MAKEDVIEIE…TRGRITYRFK (72 aa)).

This sequence belongs to the IF-1 family. As to quaternary structure, component of the 30S ribosomal translation pre-initiation complex which assembles on the 30S ribosome in the order IF-2 and IF-3, IF-1 and N-formylmethionyl-tRNA(fMet); mRNA recruitment can occur at any time during PIC assembly.

Its subcellular location is the cytoplasm. Its function is as follows. One of the essential components for the initiation of protein synthesis. Stabilizes the binding of IF-2 and IF-3 on the 30S subunit to which N-formylmethionyl-tRNA(fMet) subsequently binds. Helps modulate mRNA selection, yielding the 30S pre-initiation complex (PIC). Upon addition of the 50S ribosomal subunit IF-1, IF-2 and IF-3 are released leaving the mature 70S translation initiation complex. This Streptococcus suis (strain 05ZYH33) protein is Translation initiation factor IF-1.